A 245-amino-acid polypeptide reads, in one-letter code: 1-(5-phosphoribosyl)-5-[(5-phosphoribosylamino)methylideneamino] imidazole-4-carboxamide isomerase (245 aa).

Asp7 (proton acceptor) is an active-site residue. Asp129 (proton donor) is an active-site residue.

It belongs to the HisA/HisF family.

It localises to the cytoplasm. It catalyses the reaction 1-(5-phospho-beta-D-ribosyl)-5-[(5-phospho-beta-D-ribosylamino)methylideneamino]imidazole-4-carboxamide = 5-[(5-phospho-1-deoxy-D-ribulos-1-ylimino)methylamino]-1-(5-phospho-beta-D-ribosyl)imidazole-4-carboxamide. The protein operates within amino-acid biosynthesis; L-histidine biosynthesis; L-histidine from 5-phospho-alpha-D-ribose 1-diphosphate: step 4/9. The sequence is that of 1-(5-phosphoribosyl)-5-[(5-phosphoribosylamino)methylideneamino] imidazole-4-carboxamide isomerase from Shewanella sp. (strain MR-4).